The following is a 2104-amino-acid chain: Protein Ycf2 (2104 aa).

ATP is bound at residue 1396 to 1403 (GPVETGRS).

Belongs to the Ycf2 family.

It localises to the plastid. Its subcellular location is the chloroplast stroma. Functionally, probable ATPase of unknown function. Its presence in a non-photosynthetic plant (Epifagus virginiana) and experiments in tobacco indicate that it has an essential function which is probably not related to photosynthesis. This Adiantum capillus-veneris (Maidenhair fern) protein is Protein Ycf2 (ycf2-A).